The following is a 140-amino-acid chain: Large ribosomal subunit protein uL14 (140 aa).

Belongs to the universal ribosomal protein uL14 family. In terms of assembly, part of the 50S ribosomal subunit. Forms a cluster with proteins L3 and L24e, part of which may contact the 16S rRNA in 2 intersubunit bridges.

In terms of biological role, binds to 23S rRNA. Forms part of two intersubunit bridges in the 70S ribosome. This is Large ribosomal subunit protein uL14 from Nitrosopumilus maritimus (strain SCM1).